Reading from the N-terminus, the 317-residue chain is Toluene-4-sulfonate monooxygenase system reductase subunit TsaB1 (317 aa).

The FAD-binding FR-type domain occupies 2 to 108; the sequence is SADVPVTVAA…RATCSEMAPE (107 aa). 110-220 is an NAD(+) binding site; sequence RRVLLLAGGI…PGSVRMERFK (111 aa). In terms of domain architecture, 2Fe-2S ferredoxin-type spans 230–317; it reads QPFELVLQRA…CGGGRLVLDI (88 aa). Residues Cys-266, Cys-271, Cys-274, and Cys-304 each coordinate [2Fe-2S] cluster.

In terms of assembly, monomer. Part of the p-toluenesulfonate methyl-monooxygenase complex TsaBM, comprising the reductase TsaB and the oxygenase TsaM. It depends on FMN as a cofactor.

Its function is as follows. Iron-sulfur flavoprotein carrying electrons from NADH to the oxygenase TsaM. Involved in the toluene-4-sulfonate degradation pathway. The protein is Toluene-4-sulfonate monooxygenase system reductase subunit TsaB1 (tsaB1) of Comamonas testosteroni (Pseudomonas testosteroni).